The primary structure comprises 235 residues: Nitrile hydratase subunit beta (235 aa).

It belongs to the nitrile hydratase subunit beta family. In terms of assembly, heterodimer of an alpha and a beta chain.

It catalyses the reaction an aliphatic primary amide = an aliphatic nitrile + H2O. Functionally, NHase catalyzes the hydration of various nitrile compounds to the corresponding amides. In Rhodococcus sp, this protein is Nitrile hydratase subunit beta (nthB).